The following is a 183-amino-acid chain: MAAAMMNKSVLLNKQCGKPAAVPKVVMSKGGFARTSAVNKNRDMMVWQPFNNKMFETFSFLPPLTDEQISKQVDYILANSWTPCLEFAASDQAYAGNENCIRMGPVASTYQDNRYWTMWKLPMFGCTDGSQVLSEIQACTNAFPDAYIRLVCFDANRQVQISGFLVHRPPSATDYRLPADRQV.

The N-terminal 42 residues, 1–42 (MAAAMMNKSVLLNKQCGKPAAVPKVVMSKGGFARTSAVNKNR), are a transit peptide targeting the chloroplast.

This sequence belongs to the RuBisCO small chain family. Heterohexadecamer of 8 large and 8 small subunits.

The protein resides in the plastid. The protein localises to the chloroplast. Functionally, ruBisCO catalyzes two reactions: the carboxylation of D-ribulose 1,5-bisphosphate, the primary event in carbon dioxide fixation, as well as the oxidative fragmentation of the pentose substrate. Both reactions occur simultaneously and in competition at the same active site. Although the small subunit is not catalytic it is essential for maximal activity. The sequence is that of Ribulose bisphosphate carboxylase small subunit, chloroplastic 5 from Acetabularia acetabulum (Mermaid's wine glass).